Consider the following 196-residue polypeptide: Pro-FMRFamide-related neuropeptide VF (196 aa).

A signal peptide spans methionine 1–threonine 21. A propeptide spanning residues serine 22–arginine 57 is cleaved from the precursor. Phenylalanine 92 carries the post-translational modification Phenylalanine amide. Propeptides lie at residues asparagine 95 to glutamate 99 and asparagine 115 to serine 121. The residue at position 131 (phenylalanine 131) is a Phenylalanine amide. A propeptide spanning residues threonine 134 to lysine 196 is cleaved from the precursor.

Belongs to the FARP (FMRFamide related peptide) family. Expressed in hypothalamus, where it is localized to the dorsomedial hypothalamic nucleus (DMH), paraventricular nucleus (PVN), and to neuronal projections from the PVN to the neurosecretory zone of the median eminence.

The protein resides in the secreted. Functionally, may act in concert with kisspeptin, through opposing affects, to regulate the activity of gonadotropin-releasing hormone (GnRH) neurons across the seasons, leading to an annual change in fertility and the cyclical seasonal transition from non-breeding to breeding season. Its function is as follows. Efficiently inhibits forskolin-induced production of cAMP. Acts as a potent negative regulator of gonadotropin synthesis and secretion. Induces secretion of prolactin. In terms of biological role, efficiently inhibits forskolin-induced production of cAMP. Blocks morphine-induced analgesia. Shows no inhibitory activity of forskolin-induced production of cAMP. This Ovis aries (Sheep) protein is Pro-FMRFamide-related neuropeptide VF.